A 140-amino-acid chain; its full sequence is uncharacterized protein (140 aa).

This is an uncharacterized protein from Mycoplasma genitalium (strain ATCC 33530 / DSM 19775 / NCTC 10195 / G37) (Mycoplasmoides genitalium).